Here is a 237-residue protein sequence, read N- to C-terminus: CD99 antigen-like protein 2 (237 aa).

Positions 1-25 (MVARLTAFLVCLVFSLATLVQRGYG) are cleaved as a signal peptide. Over 26-161 (DTDGFNLEDA…PGSGISTETG (136 aa)) the chain is Extracellular. A disordered region spans residues 47–157 (DHFSTTTRRP…SNDDPGSGIS (111 aa)). 2 stretches are compositionally biased toward low complexity: residues 51–66 (TTTRRPVTTRAPANPA) and 74–84 (TTTTRRPGTTR). The span at 102 to 111 (DDRNDLDGPK) shows a compositional bias: basic and acidic residues. The O-linked (Xyl...) (chondroitin sulfate) serine glycan is linked to serine 154. Residues 162–182 (TIAGVASALAMALIGAVSSYI) form a helical membrane-spanning segment. Over 183 to 237 (SYQQKKFCFSIQQGLNADYVKGENLEAVVCEEPQVTYSKQETQSAEPPPPEPPRI) the chain is Cytoplasmic. Residues 218-227 (TYSKQETQSA) show a composition bias toward polar residues. Residues 218–237 (TYSKQETQSAEPPPPEPPRI) are disordered. Residues 228–237 (EPPPPEPPRI) show a composition bias toward pro residues.

The protein belongs to the CD99 family. Post-translationally, O-glycosylated. As to expression, highly expressed in the nervous system, including brain, dentate nucleus of hippocampus, granular and Purkinje cells of cerebellum, brain stem nucleus and choroid plexus. Expressed in peripheral blood T- and B-cells and neutrophils (at protein level). Almost undetectable in bone marrow-derived neutrophils (at protein level). Also expressed in thymocytes (at protein level) with higher expression in cortical thymocytes than in medullary thymocytes. Expressed at high levels in testis (mostly in germ cells and Sertoli cells) and ovary (mostly in granulosa cells). Expressed in lung, heart, kidney and liver (at protein level); however, expression in heart, kidney and liver seems restricted to endothelial cells (at protein level). Highly expressed in endothelial cells and to a lower level in vascular smooth muscle cells (at protein level). Low expression in spleen.

It is found in the cell membrane. Its subcellular location is the cell junction. It localises to the secreted. Plays a role in a late step of leukocyte extravasation helping cells to overcome the endothelial basement membrane. Acts at the same site as, but independently of, PECAM1. Homophilic adhesion molecule, but these interactions may not be required for cell aggregation. The protein is CD99 antigen-like protein 2 (Cd99l2) of Mus musculus (Mouse).